The chain runs to 209 residues: ATP-dependent Clp protease proteolytic subunit (209 aa).

Catalysis depends on Ser107, which acts as the Nucleophile. His132 is an active-site residue.

This sequence belongs to the peptidase S14 family. In terms of assembly, fourteen ClpP subunits assemble into 2 heptameric rings which stack back to back to give a disk-like structure with a central cavity, resembling the structure of eukaryotic proteasomes.

It is found in the cytoplasm. The catalysed reaction is Hydrolysis of proteins to small peptides in the presence of ATP and magnesium. alpha-casein is the usual test substrate. In the absence of ATP, only oligopeptides shorter than five residues are hydrolyzed (such as succinyl-Leu-Tyr-|-NHMec, and Leu-Tyr-Leu-|-Tyr-Trp, in which cleavage of the -Tyr-|-Leu- and -Tyr-|-Trp bonds also occurs).. In terms of biological role, cleaves peptides in various proteins in a process that requires ATP hydrolysis. Has a chymotrypsin-like activity. Plays a major role in the degradation of misfolded proteins. This Methylobacterium nodulans (strain LMG 21967 / CNCM I-2342 / ORS 2060) protein is ATP-dependent Clp protease proteolytic subunit.